We begin with the raw amino-acid sequence, 453 residues long: Ribulose bisphosphate carboxylase large chain (453 aa).

A propeptide spanning residues 1 to 2 (MS) is cleaved from the precursor. Pro3 carries the post-translational modification N-acetylproline. Lys14 bears the N6,N6,N6-trimethyllysine mark. Substrate contacts are provided by Asn123 and Thr173. Residue Lys175 is the Proton acceptor of the active site. Lys177 is a substrate binding site. Mg(2+) contacts are provided by Lys201, Asp203, and Glu204. Lys201 is modified (N6-carboxylysine). His294 (proton acceptor) is an active-site residue. Residues Arg295, His327, and Ser379 each coordinate substrate.

Belongs to the RuBisCO large chain family. Type I subfamily. In terms of assembly, heterohexadecamer of 8 large chains and 8 small chains; disulfide-linked. The disulfide link is formed within the large subunit homodimers. It depends on Mg(2+) as a cofactor. In terms of processing, the disulfide bond which can form in the large chain dimeric partners within the hexadecamer appears to be associated with oxidative stress and protein turnover.

The protein localises to the plastid. The protein resides in the chloroplast. It catalyses the reaction 2 (2R)-3-phosphoglycerate + 2 H(+) = D-ribulose 1,5-bisphosphate + CO2 + H2O. The enzyme catalyses D-ribulose 1,5-bisphosphate + O2 = 2-phosphoglycolate + (2R)-3-phosphoglycerate + 2 H(+). Functionally, ruBisCO catalyzes two reactions: the carboxylation of D-ribulose 1,5-bisphosphate, the primary event in carbon dioxide fixation, as well as the oxidative fragmentation of the pentose substrate in the photorespiration process. Both reactions occur simultaneously and in competition at the same active site. The sequence is that of Ribulose bisphosphate carboxylase large chain from Phuopsis stylosa (Caucasian crosswort).